The primary structure comprises 385 residues: MTKIFRKSDPFIKIVNSALVDLPSPSNISYMWNFGSILGLCLFLQIATGLILTMHFSPSIHMAFSSVVHIVRDVNHGWFIRNFHITGASLFFSCMFIHIGRGIYYGSYKNIKTWYSGVILFICAMVTAFFGYVLPWGQMSFWAATVITNLLSAVPMMGTRMVETVWGGFSVGDPTLKRFLVLHFLVPFLMIAVSLTHLLFLHETGSSNPMGMNPNLDKVPFHPYFSFKDILGFLITLSLIFLGSTLFPYLTTDPDNFTQANSLVTPPHIKPEWYFLFAYAILRAIPNKLMGVFALIMSLSVLLFMPFLIKSNLRSLTFQPFMQFTFWLMISNFILLSWLGAMPLEFPYTIMSQVTSFLYFFIFLFLFPLVSYKENKYLNSRYPPF.

Transmembrane regions (helical) follow at residues 34-54 (FGSI…ILTM), 78-99 (WFIR…FIHI), 114-134 (WYSG…GYVL), and 179-199 (FLVL…THLL). The heme b site is built by H84 and H98. Positions 183 and 197 each coordinate heme b. Residue H202 participates in a ubiquinone binding. 4 helical membrane-spanning segments follow: residues 227 to 247 (FKDI…STLF), 289 to 309 (LMGV…PFLI), 321 to 341 (FMQF…WLGA), and 348 to 368 (YTIM…FLFP).

It belongs to the cytochrome b family. As to quaternary structure, the cytochrome bc1 complex contains 3 respiratory subunits (MT-CYB, CYC1 and UQCRFS1), 2 core proteins (UQCRC1 and UQCRC2) and probably 6 low-molecular weight proteins. It depends on heme b as a cofactor.

Its subcellular location is the mitochondrion inner membrane. Component of the ubiquinol-cytochrome c reductase complex (complex III or cytochrome b-c1 complex) that is part of the mitochondrial respiratory chain. The b-c1 complex mediates electron transfer from ubiquinol to cytochrome c. Contributes to the generation of a proton gradient across the mitochondrial membrane that is then used for ATP synthesis. The sequence is that of Cytochrome b (MT-CYB) from Myxine glutinosa (Atlantic hagfish).